A 429-amino-acid chain; its full sequence is GTPase Obg (429 aa).

Positions 1 to 158 constitute an Obg domain; it reads MFVDQVKIYV…RNVQLELKVL (158 aa). Positions 124 to 145 are disordered; the sequence is RGNKRFATPANPAPELSENGEP. An OBG-type G domain is found at 159–329; it reads ADVGLVGFPS…LLLAIADKLE (171 aa). Residues 165 to 172, 190 to 194, 212 to 215, 282 to 285, and 310 to 312 each bind GTP; these read GFPSVGKS, FTTIV, DLPG, NKMD, and SAV. S172 and T192 together coordinate Mg(2+). In terms of domain architecture, OCT spans 351 to 429; the sequence is KYVAEEPDFE…LLDYEFEFMD (79 aa).

Belongs to the TRAFAC class OBG-HflX-like GTPase superfamily. OBG GTPase family. In terms of assembly, monomer. It depends on Mg(2+) as a cofactor.

The protein localises to the cytoplasm. In terms of biological role, an essential GTPase which binds GTP, GDP and possibly (p)ppGpp with moderate affinity, with high nucleotide exchange rates and a fairly low GTP hydrolysis rate. Plays a role in control of the cell cycle, stress response, ribosome biogenesis and in those bacteria that undergo differentiation, in morphogenesis control. In Listeria innocua serovar 6a (strain ATCC BAA-680 / CLIP 11262), this protein is GTPase Obg.